A 206-amino-acid chain; its full sequence is dCTP deaminase, dUMP-forming (206 aa).

DCTP contacts are provided by residues 117-122, Asp135, 143-145, Gln163, Tyr177, Lys184, and Gln188; these read RSSFGR and TLE. Residue Glu145 is the Proton donor/acceptor of the active site.

It belongs to the dCTP deaminase family. As to quaternary structure, homotrimer.

It carries out the reaction dCTP + 2 H2O = dUMP + NH4(+) + diphosphate. Its pathway is pyrimidine metabolism; dUMP biosynthesis; dUMP from dCTP: step 1/1. Bifunctional enzyme that catalyzes both the deamination of dCTP to dUTP and the hydrolysis of dUTP to dUMP without releasing the toxic dUTP intermediate. This Methanococcus maripaludis (strain C6 / ATCC BAA-1332) protein is dCTP deaminase, dUMP-forming.